The primary structure comprises 408 residues: Imidazolonepropionase (408 aa).

His-66 and His-68 together coordinate Fe(3+). Residues His-66 and His-68 each coordinate Zn(2+). 4-imidazolone-5-propanoate is bound by residues Arg-75, Tyr-138, and His-171. Residue Tyr-138 coordinates N-formimidoyl-L-glutamate. His-236 is a Fe(3+) binding site. Position 236 (His-236) interacts with Zn(2+). Gln-239 serves as a coordination point for 4-imidazolone-5-propanoate. Asp-311 provides a ligand contact to Fe(3+). Position 311 (Asp-311) interacts with Zn(2+). N-formimidoyl-L-glutamate contacts are provided by Asn-313 and Gly-315. Ser-316 contacts 4-imidazolone-5-propanoate.

The protein belongs to the metallo-dependent hydrolases superfamily. HutI family. Requires Zn(2+) as cofactor. The cofactor is Fe(3+).

The protein localises to the cytoplasm. It carries out the reaction 4-imidazolone-5-propanoate + H2O = N-formimidoyl-L-glutamate. It participates in amino-acid degradation; L-histidine degradation into L-glutamate; N-formimidoyl-L-glutamate from L-histidine: step 3/3. Its function is as follows. Catalyzes the hydrolytic cleavage of the carbon-nitrogen bond in imidazolone-5-propanoate to yield N-formimidoyl-L-glutamate. It is the third step in the universal histidine degradation pathway. This is Imidazolonepropionase from Idiomarina loihiensis (strain ATCC BAA-735 / DSM 15497 / L2-TR).